Here is a 305-residue protein sequence, read N- to C-terminus: Oxygen-dependent coproporphyrinogen-III oxidase (305 aa).

S99 contributes to the substrate binding site. The a divalent metal cation site is built by H103 and H113. The Proton donor role is filled by H113. A substrate-binding site is contributed by 115-117 (NVR). A divalent metal cation contacts are provided by H152 and H182. Residues 247-282 (YVEFNLVLDRGTLFGLQTGGRTESILMSMPPLARWE) are important for dimerization. 265-267 (GGR) is a substrate binding site.

It belongs to the aerobic coproporphyrinogen-III oxidase family. Homodimer. It depends on a divalent metal cation as a cofactor.

It is found in the cytoplasm. The catalysed reaction is coproporphyrinogen III + O2 + 2 H(+) = protoporphyrinogen IX + 2 CO2 + 2 H2O. It functions in the pathway porphyrin-containing compound metabolism; protoporphyrin-IX biosynthesis; protoporphyrinogen-IX from coproporphyrinogen-III (O2 route): step 1/1. Involved in the heme biosynthesis. Catalyzes the aerobic oxidative decarboxylation of propionate groups of rings A and B of coproporphyrinogen-III to yield the vinyl groups in protoporphyrinogen-IX. The protein is Oxygen-dependent coproporphyrinogen-III oxidase of Vibrio cholerae serotype O1 (strain ATCC 39541 / Classical Ogawa 395 / O395).